We begin with the raw amino-acid sequence, 291 residues long: Probable xyloglucan endotransglucosylase/hydrolase protein 16 (291 aa).

The signal sequence occupies residues 1–24 (MGRILNRTVLMTLLVVTMAGTAFS). The 191-residue stretch at 25 to 215 (GSFNEEFDLT…WSKAPFTAYY (191 aa)) folds into the GH16 domain. The active-site Nucleophile is the glutamate 101. The Proton donor role is filled by glutamate 105. Residue glutamate 105 participates in xyloglucan binding. Residue asparagine 109 is glycosylated (N-linked (GlcNAc...) asparagine). Xyloglucan is bound by residues 118 to 120 (HTN), 128 to 130 (NRE), 194 to 195 (DW), and glycine 199. Disulfide bonds link cysteine 223/cysteine 232 and cysteine 272/cysteine 286. Arginine 277 contributes to the xyloglucan binding site.

Belongs to the glycosyl hydrolase 16 family. XTH group 2 subfamily. Contains at least one intrachain disulfide bond essential for its enzymatic activity.

The protein resides in the secreted. It is found in the cell wall. It localises to the extracellular space. Its subcellular location is the apoplast. It carries out the reaction breaks a beta-(1-&gt;4) bond in the backbone of a xyloglucan and transfers the xyloglucanyl segment on to O-4 of the non-reducing terminal glucose residue of an acceptor, which can be a xyloglucan or an oligosaccharide of xyloglucan.. In terms of biological role, catalyzes xyloglucan endohydrolysis (XEH) and/or endotransglycosylation (XET). Cleaves and religates xyloglucan polymers, an essential constituent of the primary cell wall, and thereby participates in cell wall construction of growing tissues. This Arabidopsis thaliana (Mouse-ear cress) protein is Probable xyloglucan endotransglucosylase/hydrolase protein 16 (XTH16).